We begin with the raw amino-acid sequence, 65 residues long: Large ribosomal subunit protein bL35 (65 aa).

Belongs to the bacterial ribosomal protein bL35 family.

The polypeptide is Large ribosomal subunit protein bL35 (Methylobacillus flagellatus (strain ATCC 51484 / DSM 6875 / VKM B-1610 / KT)).